We begin with the raw amino-acid sequence, 405 residues long: Serpin B12 (405 aa).

The interval 64-83 (SQNESKEPDPCLKSNKQKAG) is disordered.

Belongs to the serpin family. Ov-serpin subfamily. Interacts with SLFN12; as part of a pathway regulating cell differentiation. May interact with USP14. As to expression, expressed in many tissues, including brain, bone marrow, lymph node, heart, lung, liver, pancreas, testis, ovary, and intestine.

It is found in the cytoplasm. In terms of biological role, inhibits trypsin and plasmin, but not thrombin, coagulation factor Xa, or urokinase-type plasminogen activator. May play a role in cell differentiation. In Homo sapiens (Human), this protein is Serpin B12 (SERPINB12).